Here is an 832-residue protein sequence, read N- to C-terminus: Serine/threonine-protein kinase Doa (832 aa).

Disordered regions lie at residues 1–86, 135–158, 179–215, and 258–419; these read MVAA…SKYI, LLQH…QQYP, SDPF…KQAP, and SKIG…QLQQ. Polar residues predominate over residues 8-18; sequence VPTSSSSSAAT. Positions 20–32 are enriched in basic and acidic residues; the sequence is RQKDVDNKLEKCL. 3 stretches are compositionally biased toward low complexity: residues 40 to 53, 137 to 158, and 183 to 203; these read TSSN…SNNN, QHQQ…QQYP, and MQQQ…KLQQ. Residues 271-282 are compositionally biased toward polar residues; it reads HSASFSSAQRPT. Composition is skewed to low complexity over residues 285 to 310, 347 to 365, and 396 to 419; these read QFHQ…QHQH, QMQP…TQFQ, and SSSS…QLQQ. Residues 479 to 799 enclose the Protein kinase domain; that stretch reads YKIMATLGEG…LGEALHHPFF (321 aa). Residues 485 to 493 and Lys508 each bind ATP; that span reads LGEGTFGRV. Asp605 functions as the Proton acceptor in the catalytic mechanism. The interval 809–832 is disordered; that stretch reads GEVSNKQPLSSGSSSRERSHSLSR. Residues 823–832 show a composition bias toward basic and acidic residues; it reads SRERSHSLSR.

It belongs to the protein kinase superfamily. CMGC Ser/Thr protein kinase family. Lammer subfamily. Interacts (via N-terminus) with x16 (via Arg/Ser-rich region). Interacts with eEF1gamma (via C-terminus); the interaction is probably direct, is transient and leads to phosphorylation of eEF1gamma by Doa. Mg(2+) is required as a cofactor. Post-translationally, autophosphorylated on serine, threonine and tyrosine residues. Ubiquitous expression in embryos. Stage 17 embryos show elevated expression in CNS and brain. Ubiquitous expression in larval imaginal disks. Increased expression posterior to the eye-antennal disk morphogenetic furrow.

It is found in the cytoplasm. The protein resides in the cytosol. Its subcellular location is the nucleus. It catalyses the reaction L-seryl-[protein] + ATP = O-phospho-L-seryl-[protein] + ADP + H(+). It carries out the reaction L-threonyl-[protein] + ATP = O-phospho-L-threonyl-[protein] + ADP + H(+). The catalysed reaction is L-tyrosyl-[protein] + ATP = O-phospho-L-tyrosyl-[protein] + ADP + H(+). In terms of biological role, dual specificity kinase involved in the negative regulation of microtubule-based transport through phsophorylation of the microtuble-binding protein eEF1gamma. May function in the control of alternative splicing by phosphorylating serine/arginine-rich splicing factors, the SR proteins, including x16. Negative regulator of the copia retrotransposon element of the white (w) gene. In the eye, it is required for normal pigmentation, photoreceptor cell development and for organization of interommatidial bristles. Also essential for embryonic segmentation and differentiation of the nervous system. May be the specific isoform involved in regulation of microtubule-based transport through phosphorylation of the microtubule binding protein eEF1gamma. This Drosophila melanogaster (Fruit fly) protein is Serine/threonine-protein kinase Doa.